The sequence spans 97 residues: Large ribosomal subunit protein bL28 (97 aa).

The protein belongs to the bacterial ribosomal protein bL28 family.

This is Large ribosomal subunit protein bL28 from Rickettsia canadensis (strain McKiel).